Consider the following 536-residue polypeptide: Chlorophyllide a oxygenase, chloroplastic (536 aa).

The transit peptide at 1 to 36 (MNAAVFSPSALSLPISFSKTRSSFLSRKKGVKGEFR) directs the protein to the chloroplast. Positions 123-150 (IGTVKKELAGLQEELSKAHQQVHISEAR) form a coiled coil. One can recognise a Rieske domain in the interval 221 to 321 (WYPVAFTADL…CLEQEGMIWI (101 aa)). Residues cysteine 262, histidine 264, cysteine 281, and histidine 284 each contribute to the [2Fe-2S] cluster site. Fe cation-binding residues include aspartate 360, aspartate 364, histidine 367, and histidine 372.

The protein resides in the plastid. Its subcellular location is the chloroplast membrane. It localises to the chloroplast thylakoid membrane. The catalysed reaction is chlorophyllide a + 2 NADPH + 2 O2 + 2 H(+) = chlorophyllide b + 2 NADP(+) + 3 H2O. It functions in the pathway porphyrin-containing compound metabolism; chlorophyll biosynthesis. Functionally, catalyzes a two-step oxygenase reaction involved in the synthesis of chlorophyll b. Acts specifically on the non-esterified chlorophyllide a and not on chlorophyll a. The polypeptide is Chlorophyllide a oxygenase, chloroplastic (CAO) (Arabidopsis thaliana (Mouse-ear cress)).